Reading from the N-terminus, the 233-residue chain is Auxin-responsive protein IAA11 (233 aa).

Disordered regions lie at residues methionine 1–glycine 27 and proline 46–glutamine 100. Positions leucine 11–leucine 15 match the EAR-like (transcriptional repression) motif. Residues glycine 54–aspartate 63 show a composition bias toward acidic residues. Residues alanine 122–glycine 217 enclose the PB1 domain.

The protein belongs to the Aux/IAA family. As to quaternary structure, homodimers and heterodimers. In terms of tissue distribution, highly expressed in etiolated shoots. Expressed in roots.

It is found in the nucleus. Functionally, aux/IAA proteins are short-lived transcriptional factors that function as repressors of early auxin response genes at low auxin concentrations. In Oryza sativa subsp. japonica (Rice), this protein is Auxin-responsive protein IAA11 (IAA11).